The chain runs to 121 residues: ATP synthase epsilon chain (121 aa).

Belongs to the ATPase epsilon chain family. F-type ATPases have 2 components, CF(1) - the catalytic core - and CF(0) - the membrane proton channel. CF(1) has five subunits: alpha(3), beta(3), gamma(1), delta(1), epsilon(1). CF(0) has three main subunits: a, b and c.

It localises to the cell membrane. Functionally, produces ATP from ADP in the presence of a proton gradient across the membrane. In Mycobacterium bovis (strain ATCC BAA-935 / AF2122/97), this protein is ATP synthase epsilon chain (atpC).